The primary structure comprises 161 residues: MPSFDVVSEANMIEVKNAIEQSNKEISTRFDFKGSDARVEQKERELTLFADDDFKLGQVKDVLINKLAKRNVDVRFLDYGKVEKIGGDKVKQIVTVKKGVTGDLAKKIVRLVKDSKIKVQASIQGDAVRVTGTKRDDLQSVIAMLRKDVTDTPLDFNNFRD.

It belongs to the YajQ family.

Nucleotide-binding protein. This is Nucleotide-binding protein BamMC406_2474 from Burkholderia ambifaria (strain MC40-6).